A 769-amino-acid chain; its full sequence is Probable beta-glucosidase M (769 aa).

An N-terminal signal peptide occupies residues 1–22; it reads MHSNVGLAGLAGLLATASVCLS. N-linked (GlcNAc...) asparagine glycosylation is found at asparagine 28, asparagine 75, and asparagine 262. Aspartate 290 is an active-site residue. Asparagine 318, asparagine 325, asparagine 396, asparagine 437, asparagine 510, asparagine 546, and asparagine 625 each carry an N-linked (GlcNAc...) asparagine glycan.

The protein belongs to the glycosyl hydrolase 3 family.

The protein localises to the secreted. It carries out the reaction Hydrolysis of terminal, non-reducing beta-D-glucosyl residues with release of beta-D-glucose.. It participates in glycan metabolism; cellulose degradation. In terms of biological role, beta-glucosidases are one of a number of cellulolytic enzymes involved in the degradation of cellulosic biomass. Catalyzes the last step releasing glucose from the inhibitory cellobiose. This Aspergillus fumigatus (strain CBS 144.89 / FGSC A1163 / CEA10) (Neosartorya fumigata) protein is Probable beta-glucosidase M (bglM).